A 376-amino-acid chain; its full sequence is Palmitoyltransferase PFA4 (376 aa).

The Cytoplasmic portion of the chain corresponds to 1–11; that stretch reads MPVKLKWPWLG. Residues 12-32 traverse the membrane as a helical segment; it reads IAIPSFLIASIGYCAHYFILL. The Lumenal segment spans residues 33-40; the sequence is NFLSLRKQ. A helical transmembrane segment spans residues 41–61; sequence LWYQFCQTMIWLSYYLAIYTP. Topologically, residues 62 to 122 are cytoplasmic; sequence PGKPPTNFKP…NCVGYNNFPH (61 aa). Residues 78–128 form the DHHC domain; that stretch reads VYCKKCKCYKPERSHHCKTCNQCVLMMDHHCPWTMNCVGYNNFPHFIRFLF. Residue Cys108 is the S-palmitoyl cysteine intermediate of the active site. The helical transmembrane segment at 123 to 143 threads the bilayer; the sequence is FIRFLFWVIVGTTSLAIFLTT. Topologically, residues 144–163 are lumenal; the sequence is RIHSIWVHRSSPSYLYYKSE. Residues 164 to 184 form a helical membrane-spanning segment; it reads LIFLTILTPLNAFILLTISIL. Residues 185-376 are Cytoplasmic-facing; it reads MIRCLFNQIF…EDFGVDVDVE (192 aa).

The protein belongs to the DHHC palmitoyltransferase family. PFA4 subfamily.

It localises to the endoplasmic reticulum membrane. The catalysed reaction is L-cysteinyl-[protein] + hexadecanoyl-CoA = S-hexadecanoyl-L-cysteinyl-[protein] + CoA. Functionally, mediates the reversible addition of palmitate to target proteins, thereby regulating their membrane association and biological function. This Candida glabrata (strain ATCC 2001 / BCRC 20586 / JCM 3761 / NBRC 0622 / NRRL Y-65 / CBS 138) (Yeast) protein is Palmitoyltransferase PFA4.